A 303-amino-acid chain; its full sequence is Probable 5-dehydro-4-deoxyglucarate dehydratase (303 aa).

This sequence belongs to the DapA family.

The catalysed reaction is 5-dehydro-4-deoxy-D-glucarate + H(+) = 2,5-dioxopentanoate + CO2 + H2O. It participates in carbohydrate acid metabolism; D-glucarate degradation; 2,5-dioxopentanoate from D-glucarate: step 2/2. In Acinetobacter baylyi (strain ATCC 33305 / BD413 / ADP1), this protein is Probable 5-dehydro-4-deoxyglucarate dehydratase.